A 554-amino-acid chain; its full sequence is Apyrase (554 aa).

An N-terminal signal peptide occupies residues 1–21; it reads MFKITVFIYVLQLILPSKVHS. Residues Asp-43, His-45, Asp-92, Asn-124, His-224, and His-248 each coordinate a divalent metal cation. The AMP site is built by Arg-358, Asn-394, Arg-399, Phe-418, Phe-504, and Asp-510.

Belongs to the 5'-nucleotidase family. The cofactor is a divalent metal cation. Salivary gland (at protein level).

The protein resides in the secreted. The enzyme catalyses a ribonucleoside 5'-triphosphate + 2 H2O = a ribonucleoside 5'-phosphate + 2 phosphate + 2 H(+). In terms of biological role, facilitates hematophagy by inhibiting ADP-dependent platelet aggregation in the host. Cleaves adenosine triphosphate (ATP) and adenosine diphosphate (ADP) to adenosine monophosphate (AMP) and inorganic phosphate. Shows potential for antithrombotic activity. Can induce basophil activation. May reduce probing time by facilitating the speed of locating blood. This is Apyrase from Tabanus yao (Horsefly).